We begin with the raw amino-acid sequence, 66 residues long: Large ribosomal subunit protein bL35 (66 aa).

It belongs to the bacterial ribosomal protein bL35 family.

The sequence is that of Large ribosomal subunit protein bL35 from Caulobacter vibrioides (strain ATCC 19089 / CIP 103742 / CB 15) (Caulobacter crescentus).